The sequence spans 201 residues: Recombination protein RecR (201 aa).

The C4-type zinc-finger motif lies at 57-72 (CQVCYSLSDNDICDIC). One can recognise a Toprim domain in the interval 80–177 (NKICIVESYP…RITRITYGIS (98 aa)).

Belongs to the RecR family.

Its function is as follows. May play a role in DNA repair. It seems to be involved in an RecBC-independent recombinational process of DNA repair. It may act with RecF and RecO. The chain is Recombination protein RecR from Brachyspira hyodysenteriae (strain ATCC 49526 / WA1).